The following is a 270-amino-acid chain: Bis(5'-nucleosyl)-tetraphosphatase, symmetrical (270 aa).

It belongs to the Ap4A hydrolase family.

It carries out the reaction P(1),P(4)-bis(5'-adenosyl) tetraphosphate + H2O = 2 ADP + 2 H(+). Its function is as follows. Hydrolyzes diadenosine 5',5'''-P1,P4-tetraphosphate to yield ADP. The sequence is that of Bis(5'-nucleosyl)-tetraphosphatase, symmetrical from Actinobacillus pleuropneumoniae serotype 5b (strain L20).